Consider the following 122-residue polypeptide: Large ribosomal subunit protein uL14 (122 aa).

It belongs to the universal ribosomal protein uL14 family. As to quaternary structure, part of the 50S ribosomal subunit. Forms a cluster with proteins L3 and L19. In the 70S ribosome, L14 and L19 interact and together make contacts with the 16S rRNA in bridges B5 and B8.

Binds to 23S rRNA. Forms part of two intersubunit bridges in the 70S ribosome. The polypeptide is Large ribosomal subunit protein uL14 (Listeria monocytogenes serotype 4b (strain CLIP80459)).